Here is a 319-residue protein sequence, read N- to C-terminus: 4-hydroxy-3-methylbut-2-enyl diphosphate reductase (319 aa).

Position 17 (Cys-17) interacts with [4Fe-4S] cluster. Residues His-46 and His-79 each coordinate (2E)-4-hydroxy-3-methylbut-2-enyl diphosphate. His-46 and His-79 together coordinate dimethylallyl diphosphate. Isopentenyl diphosphate contacts are provided by His-46 and His-79. Residue Cys-101 coordinates [4Fe-4S] cluster. Residue His-129 participates in (2E)-4-hydroxy-3-methylbut-2-enyl diphosphate binding. Residue His-129 coordinates dimethylallyl diphosphate. An isopentenyl diphosphate-binding site is contributed by His-129. The active-site Proton donor is the Glu-131. Residue Thr-170 participates in (2E)-4-hydroxy-3-methylbut-2-enyl diphosphate binding. Position 200 (Cys-200) interacts with [4Fe-4S] cluster. Positions 228, 229, 230, and 273 each coordinate (2E)-4-hydroxy-3-methylbut-2-enyl diphosphate. Dimethylallyl diphosphate-binding residues include Ser-228, Ser-229, Asn-230, and Ser-273. Ser-228, Ser-229, Asn-230, and Ser-273 together coordinate isopentenyl diphosphate.

Belongs to the IspH family. It depends on [4Fe-4S] cluster as a cofactor.

The enzyme catalyses isopentenyl diphosphate + 2 oxidized [2Fe-2S]-[ferredoxin] + H2O = (2E)-4-hydroxy-3-methylbut-2-enyl diphosphate + 2 reduced [2Fe-2S]-[ferredoxin] + 2 H(+). It catalyses the reaction dimethylallyl diphosphate + 2 oxidized [2Fe-2S]-[ferredoxin] + H2O = (2E)-4-hydroxy-3-methylbut-2-enyl diphosphate + 2 reduced [2Fe-2S]-[ferredoxin] + 2 H(+). It functions in the pathway isoprenoid biosynthesis; dimethylallyl diphosphate biosynthesis; dimethylallyl diphosphate from (2E)-4-hydroxy-3-methylbutenyl diphosphate: step 1/1. It participates in isoprenoid biosynthesis; isopentenyl diphosphate biosynthesis via DXP pathway; isopentenyl diphosphate from 1-deoxy-D-xylulose 5-phosphate: step 6/6. Its function is as follows. Catalyzes the conversion of 1-hydroxy-2-methyl-2-(E)-butenyl 4-diphosphate (HMBPP) into a mixture of isopentenyl diphosphate (IPP) and dimethylallyl diphosphate (DMAPP). Acts in the terminal step of the DOXP/MEP pathway for isoprenoid precursor biosynthesis. The polypeptide is 4-hydroxy-3-methylbut-2-enyl diphosphate reductase (Cereibacter sphaeroides (strain ATCC 17029 / ATH 2.4.9) (Rhodobacter sphaeroides)).